A 289-amino-acid chain; its full sequence is Acetyl-coenzyme A carboxylase carboxyl transferase subunit beta (289 aa).

The CoA carboxyltransferase N-terminal domain maps to 36–289 (MWLRCPHCHQ…LLKTGSVANE (254 aa)). Zn(2+) contacts are provided by Cys40, Cys43, Cys58, and Cys61. The C4-type zinc finger occupies 40–61 (CPHCHQLLFAKQLTQYAVCPNC).

This sequence belongs to the AccD/PCCB family. Acetyl-CoA carboxylase is a heterohexamer composed of biotin carboxyl carrier protein (AccB), biotin carboxylase (AccC) and two subunits each of ACCase subunit alpha (AccA) and ACCase subunit beta (AccD). Zn(2+) serves as cofactor.

The protein resides in the cytoplasm. It catalyses the reaction N(6)-carboxybiotinyl-L-lysyl-[protein] + acetyl-CoA = N(6)-biotinyl-L-lysyl-[protein] + malonyl-CoA. Its pathway is lipid metabolism; malonyl-CoA biosynthesis; malonyl-CoA from acetyl-CoA: step 1/1. In terms of biological role, component of the acetyl coenzyme A carboxylase (ACC) complex. Biotin carboxylase (BC) catalyzes the carboxylation of biotin on its carrier protein (BCCP) and then the CO(2) group is transferred by the transcarboxylase to acetyl-CoA to form malonyl-CoA. In Limosilactobacillus reuteri subsp. reuteri (strain JCM 1112) (Lactobacillus reuteri), this protein is Acetyl-coenzyme A carboxylase carboxyl transferase subunit beta.